Here is a 395-residue protein sequence, read N- to C-terminus: Hdr-like menaquinol oxidoreductase integral membrane subunit (395 aa).

10 helical membrane passes run 15–35, 57–77, 88–108, 126–146, 158–178, 196–216, 231–251, 274–294, 305–325, and 364–384; these read YFALVIILAAVTALGFYAYVL, IPYFIGLSAGSLIVSALAGVF, IAAYMAAAWIIAAILSIALDI, IFSWNAFLYSSYFVICSIYLL, FMAGLAVFWAVLVHSGTGAIY, FIVCAITSGLGLLLANLYFTF, LALIFAGLMMVLGYFLAVEGL, VFWSFWLLVIFGIAIPIIIVL, ITFAGILHAALVFAERFYLII, and IGLIAMVYLIFVVGVKLFALI.

Belongs to the NrfD family. In terms of assembly, consists of five subunits: an integral membrane subunit, a cytochrome b-like subunit, a cytochrome c subunit and two iron-sulfur subunits.

It localises to the cell membrane. Has menaquinol-oxidizing activity. HmeB subunit may function as a menaquinol-oxidizing site. HmeA, HmeB and HmeE subunits may together catalyze electron transfer from menaquinol to cytochrome c. This Archaeoglobus fulgidus (strain ATCC 49558 / DSM 4304 / JCM 9628 / NBRC 100126 / VC-16) protein is Hdr-like menaquinol oxidoreductase integral membrane subunit (hmeB).